Here is a 384-residue protein sequence, read N- to C-terminus: Protein RecA (384 aa).

Residue 76-83 (GPESSGKT) participates in ATP binding. Residues 346–365 (QGSAEPEKAAKPEKVEKADK) are disordered. Positions 350–365 (EPEKAAKPEKVEKADK) are enriched in basic and acidic residues.

It belongs to the RecA family.

The protein localises to the cytoplasm. Can catalyze the hydrolysis of ATP in the presence of single-stranded DNA, the ATP-dependent uptake of single-stranded DNA by duplex DNA, and the ATP-dependent hybridization of homologous single-stranded DNAs. It interacts with LexA causing its activation and leading to its autocatalytic cleavage. The chain is Protein RecA from Polaromonas naphthalenivorans (strain CJ2).